The sequence spans 152 residues: UPF0178 protein swp_1285 (152 aa).

The protein belongs to the UPF0178 family.

This Shewanella piezotolerans (strain WP3 / JCM 13877) protein is UPF0178 protein swp_1285.